The following is a 254-amino-acid chain: 5-oxoprolinase subunit A (254 aa).

Belongs to the LamB/PxpA family. Forms a complex composed of PxpA, PxpB and PxpC.

The enzyme catalyses 5-oxo-L-proline + ATP + 2 H2O = L-glutamate + ADP + phosphate + H(+). In terms of biological role, catalyzes the cleavage of 5-oxoproline to form L-glutamate coupled to the hydrolysis of ATP to ADP and inorganic phosphate. The protein is 5-oxoprolinase subunit A of Rhodopseudomonas palustris (strain ATCC BAA-98 / CGA009).